We begin with the raw amino-acid sequence, 647 residues long: MAQGSVSFKDVTVDFSQEEWQHLDPAQKTLYMDVMLENYCHLISVGCHMTKPDVILKLERGEEPWTSFKGHTCLEENWKAEDFLLKFKEQQDKYSRSVILINHKKLVNENGSTCEKTLTLSKNPINSKKLPPEYDTREKILKNVSELIISNLSPTRRRLSECNGYGKSLLNTKPETAHSGVKSHNQCGRTISHNEKITQYHKMETPAQSFEYNDCEKAFLKRGGPVTHSRTYRRGNTSDYNKRRRTTNIEKKHTCTECGKSFCRKSVLILHQGIHTEEKPYQCHQCGNSFRRKSYLIDHQRTHTGEKPFVCNECGKSFRLKTALTDHQRTHTGEKSYECPQCRNAFRLKSHLIRHQRTHTGEKPYECSDCGKSFRQKTTLSLHQRIHTGEKPYICKECGKSFHQKANLTVHQRTHTGEKPYICNECGKSFSQKTTLALHEKTHNEEKPYICNECGKSFPQKTTLVAHQRTHTGEKSYECPHCGKAFRMKSYLIDHHRTHTGEKPYECNECGKSFSQKTNLNLHQRIHTGEKPYICNECGKSFRQKATLTVHQKIHTGQKSYECPQCGKAFSRKSYLIHHQRTHTGEKPYKCSECGKCFRQKTNLIVHQRTHTGEKPYICNECGKSFSYKRNLIVHQRTHKGENMEMQ.

The KRAB domain maps to 32 to 77 (MDVMLENYCHLISVGCHMTKPDVILKLERGEEPWTSFKGHTCLEEN). Glycyl lysine isopeptide (Lys-Gly) (interchain with G-Cter in SUMO2) cross-links involve residues lysine 173, lysine 202, and lysine 217. The C2H2-type 1; degenerate zinc-finger motif lies at 210-232 (FEYNDCEKAFLKRGGPVTHSRTY). 7 C2H2-type zinc fingers span residues 253–275 (HTCT…QGIH), 281–303 (YQCH…QRTH), 309–331 (FVCN…QRTH), 337–359 (YECP…QRTH), 365–387 (YECS…QRIH), 393–415 (YICK…QRTH), and 421–443 (YICN…EKTH). A Glycyl lysine isopeptide (Lys-Gly) (interchain with G-Cter in SUMO2) cross-link involves residue lysine 447. 7 consecutive C2H2-type zinc fingers follow at residues 449–471 (YICN…QRTH), 477–499 (YECP…HRTH), 505–527 (YECN…QRIH), 533–555 (YICN…QKIH), 561–583 (YECP…QRTH), 589–611 (YKCS…QRTH), and 617–639 (YICN…QRTH).

Belongs to the krueppel C2H2-type zinc-finger protein family.

Its subcellular location is the nucleus. Its function is as follows. May be involved in transcriptional regulation. The polypeptide is Zinc finger protein 567 (ZNF567) (Bos taurus (Bovine)).